A 76-amino-acid chain; its full sequence is MEKKIIFLCFLVALLTFPEFISSEVIRDSVIHDEEKFANRSYCIKTCATEFTGGDESRIKDVRPRHYKCVCWYYSD.

The signal sequence occupies residues 1 to 23 (MEKKIIFLCFLVALLTFPEFISS).

In terms of processing, contains 2 disulfide bonds. As to expression, expressed by the venom gland.

Its subcellular location is the secreted. This is U-scoloptoxin(15)-Ssd3b from Scolopendra dehaani (Thai centipede).